Reading from the N-terminus, the 188-residue chain is VQ motif-containing protein 18 (188 aa).

Disordered regions lie at residues 1 to 20 (MEIT…VSMN), 58 to 92 (LTGK…HQPV), and 157 to 188 (GFIF…HNSS). The VQ motif lies at 51-60 (FRSLVQSLTG). The segment covering 161 to 179 (NNNNNNNNNNNNNNNNNTN) has biased composition (low complexity).

Its subcellular location is the nucleus. Functionally, may function as positive regulator of plant growth. This is VQ motif-containing protein 18 from Arabidopsis thaliana (Mouse-ear cress).